The chain runs to 87 residues: uncharacterized protein (87 aa).

Helical transmembrane passes span 8–28 (IVVL…IFDL) and 47–67 (LAGS…LIGL).

The protein localises to the cell membrane. This is an uncharacterized protein from Bacillus subtilis (strain 168).